Here is an 80-residue protein sequence, read N- to C-terminus: Small ribosomal subunit protein bS18 (80 aa).

Belongs to the bacterial ribosomal protein bS18 family. Part of the 30S ribosomal subunit. Forms a tight heterodimer with protein bS6.

Functionally, binds as a heterodimer with protein bS6 to the central domain of the 16S rRNA, where it helps stabilize the platform of the 30S subunit. The protein is Small ribosomal subunit protein bS18 of Staphylococcus aureus (strain Mu3 / ATCC 700698).